A 482-amino-acid chain; its full sequence is UDP-glycosyltransferase 1 (482 aa).

Asn243 carries N-linked (GlcNAc...) asparagine glycosylation. A helical transmembrane segment spans residues 450–470; that stretch reads IYLVYALVLGSAWWIGKTILG.

The protein belongs to the glycosyltransferase 28 family.

The protein localises to the membrane. It carries out the reaction exophillate aglycone + UDP-alpha-D-glucose = exophillate + UDP + H(+). Its pathway is secondary metabolite biosynthesis. Functionally, acts as a depside 2-O-glucosyltransferase that catalyzes the first glycosylation step during phaeomoniecin D biosynthesis by producing the intermediate exophillic acid which is further O-galactosylated into phaeomoniecin D by the C-galactosyltransferase OGT2. The polypeptide is UDP-glycosyltransferase 1 (Phaeomoniella chlamydospora (Phaeoacremonium chlamydosporum)).